A 418-amino-acid polypeptide reads, in one-letter code: NADH-quinone oxidoreductase subunit D (418 aa).

Belongs to the complex I 49 kDa subunit family. In terms of assembly, NDH-1 is composed of 14 different subunits. Subunits NuoB, C, D, E, F, and G constitute the peripheral sector of the complex.

The protein localises to the cell inner membrane. The catalysed reaction is a quinone + NADH + 5 H(+)(in) = a quinol + NAD(+) + 4 H(+)(out). In terms of biological role, NDH-1 shuttles electrons from NADH, via FMN and iron-sulfur (Fe-S) centers, to quinones in the respiratory chain. The immediate electron acceptor for the enzyme in this species is believed to be ubiquinone. Couples the redox reaction to proton translocation (for every two electrons transferred, four hydrogen ions are translocated across the cytoplasmic membrane), and thus conserves the redox energy in a proton gradient. The chain is NADH-quinone oxidoreductase subunit D from Neisseria meningitidis serogroup C / serotype 2a (strain ATCC 700532 / DSM 15464 / FAM18).